A 517-amino-acid polypeptide reads, in one-letter code: GMP synthase [glutamine-hydrolyzing] (517 aa).

One can recognise a Glutamine amidotransferase type-1 domain in the interval 4 to 193 (KIIILDFGSQ…VVDICGGKQD (190 aa)). Cys-79 serves as the catalytic Nucleophile. Catalysis depends on residues His-167 and Glu-169. One can recognise a GMPS ATP-PPase domain in the interval 194–382 (WSAASFIETT…LGMPEHLITR (189 aa)). An ATP-binding site is contributed by 221-227 (SGGVDSS).

In terms of assembly, homodimer.

The catalysed reaction is XMP + L-glutamine + ATP + H2O = GMP + L-glutamate + AMP + diphosphate + 2 H(+). The protein operates within purine metabolism; GMP biosynthesis; GMP from XMP (L-Gln route): step 1/1. Catalyzes the synthesis of GMP from XMP. The polypeptide is GMP synthase [glutamine-hydrolyzing] (Phocaeicola vulgatus (strain ATCC 8482 / DSM 1447 / JCM 5826 / CCUG 4940 / NBRC 14291 / NCTC 11154) (Bacteroides vulgatus)).